The primary structure comprises 122 residues: Protein translocase subunit SecE (122 aa).

Transmembrane regions (helical) follow at residues 14 to 34 (LLKWLLVAVLVVVAVVGNQYF), 38 to 58 (PILYRVLGILVLAVIAAFLAL), and 93 to 113 (LIVVAVVLVMALLLWGLDSLL).

Belongs to the SecE/SEC61-gamma family. Component of the Sec protein translocase complex. Heterotrimer consisting of SecY, SecE and SecG subunits. The heterotrimers can form oligomers, although 1 heterotrimer is thought to be able to translocate proteins. Interacts with the ribosome. Interacts with SecDF, and other proteins may be involved. Interacts with SecA.

The protein resides in the cell inner membrane. Essential subunit of the Sec protein translocation channel SecYEG. Clamps together the 2 halves of SecY. May contact the channel plug during translocation. The polypeptide is Protein translocase subunit SecE (Pseudomonas aeruginosa (strain ATCC 15692 / DSM 22644 / CIP 104116 / JCM 14847 / LMG 12228 / 1C / PRS 101 / PAO1)).